Reading from the N-terminus, the 109-residue chain is Glutaredoxin 4 (109 aa).

In terms of domain architecture, Glutaredoxin spans 4-106 (LDKIKKQISE…TLLADVAAKY (103 aa)). Lysine 21 contacts glutathione. Cysteine 29 lines the [2Fe-2S] cluster pocket. Glutathione is bound by residues arginine 58, phenylalanine 70, and 83 to 84 (CD).

Belongs to the glutaredoxin family. Monothiol subfamily. As to quaternary structure, homodimer.

The protein resides in the cytoplasm. Functionally, monothiol glutaredoxin involved in the biogenesis of iron-sulfur clusters. This is Glutaredoxin 4 (grxD) from Pasteurella multocida (strain Pm70).